We begin with the raw amino-acid sequence, 1076 residues long: MLRNGNEGMSTIPGFSQIQFEGFCRFINQALAEELNKFPAIKDPDHEIAFQLFAKGYQLLEPSIKERDAVYESLTYSSELYVSARLIFGFDVQKQTISIGNIPIMNSLGTFIINGIYRIVINQILLSPGIYYRSELDHKGISIYTGTIISDWGGRSELAIDKKERIWARVSRKQKISILVLSSAMGSNLREILDNVSYPEIFLSFPNAKEKKRIESKEKAILEFYQQFACVGGDLVFSESLCEELQKKFFQQKCELGRIGRRNMNRRLNLDIPQNNTFLLPRDVLAATDHLIGMKFGTGILDDDDMNHLKNKRIRSVADLLQDQFGLALGRLQHAVQKTIRRVFIRQSKPTPQTLVTPTSTSILLITTYETFFGTYPLSQVFDQTNPLTQTVHGRKVSCLGPGGLTGRTSSFRSRDIHPSHYGRICPIDTSEGINVGLTGSLAIHARINHLWGSIESPFYEISAEKAKKKKSRQVVYLSPNRDEYYMIAAGNSLSLNQGIQEEQVVPARYRQEFLTIAWEQIHVRSIFPFQYFSIGGSLIPFIEHNDANRALMSSNMQRQAVPLSRSEKCIVGTGLERQTALDSGVSVIAEREGKILSTDSHKILLSSSGKTLSIPLVNHRRSNKNNCMHQKSRVPRGKSIKKGQILAEGAATVGGELALGKNVLVAYMPWEGYNFEDAVLISERLVYEDIYTSFHIRKYEIQTDTTSQGSAEKITKEIPHLEAHLLRNLDRNGVVRLGSWVETSDILVGKLTPQIASESSYIAEAGLLRAIFGLEVSTSKETSLKLPIGGRGRVIDVKWIQRDPLDIMVRVYILQKREIKVGDKVAGRHGNKGIISKILPRQDMPYLQDGTPVDMVFNPLGVPSRMNVGQIFESSLGLAGDLLKKHYRIAPFDERYEQEASRKLVFSELYEASKETKNPWVFEPEYPGKSRIFDGRTGDPFEQPVLIGKSYILKLIHQVDEKIHGRSTGPYSLVTQQPVRGRAKQGGQRVGEMEVWALEGFGVAHILQEILTYKSDHLIARQEILNATIWGKRIPNHEDPPESFRVLVRELRSLALELNHFLVSEKNFQVTREEV.

Belongs to the RNA polymerase beta chain family. In plastids the minimal PEP RNA polymerase catalytic core is composed of four subunits: alpha, beta, beta', and beta''. When a (nuclear-encoded) sigma factor is associated with the core the holoenzyme is formed, which can initiate transcription.

Its subcellular location is the plastid. The protein resides in the chloroplast. It catalyses the reaction RNA(n) + a ribonucleoside 5'-triphosphate = RNA(n+1) + diphosphate. Functionally, DNA-dependent RNA polymerase catalyzes the transcription of DNA into RNA using the four ribonucleoside triphosphates as substrates. In Lolium perenne (Perennial ryegrass), this protein is DNA-directed RNA polymerase subunit beta.